Consider the following 341-residue polypeptide: Ribosomal RNA small subunit methyltransferase H (341 aa).

S-adenosyl-L-methionine is bound by residues 47-49 (GGY), aspartate 64, phenylalanine 97, aspartate 109, and glutamine 116.

It belongs to the methyltransferase superfamily. RsmH family.

It is found in the cytoplasm. It catalyses the reaction cytidine(1402) in 16S rRNA + S-adenosyl-L-methionine = N(4)-methylcytidine(1402) in 16S rRNA + S-adenosyl-L-homocysteine + H(+). In terms of biological role, specifically methylates the N4 position of cytidine in position 1402 (C1402) of 16S rRNA. The polypeptide is Ribosomal RNA small subunit methyltransferase H (Allorhizobium ampelinum (strain ATCC BAA-846 / DSM 112012 / S4) (Agrobacterium vitis (strain S4))).